Here is a 766-residue protein sequence, read N- to C-terminus: Protein zer-1 homolog (766 aa).

A2 carries the post-translational modification N-acetylalanine. LRR repeat units lie at residues S226–L245, H246–R268, and L278–E302. 5 ARM repeats span residues R427 to I467, D511 to D556, T558 to E600, K602 to F643, and P714 to N756.

The protein belongs to the zyg-11 family. In terms of assembly, interacts with the ELOC-ELOB/Elongin BC complex. Part of an E3 ubiquitin ligase complex including ZER1, CUL2 and Elongin BC. Expressed in testis, spermatocytes and spermatids (at protein level). Expressed in spermatocytes, spermatids, prostate, skeletal muscle, ovary, small intestine, heart, brain and pancreas.

In terms of biological role, serves as substrate adapter subunit in the E3 ubiquitin ligase complex ZYG11B-CUL2-Elongin BC. Acts to target substrates bearing N-terminal degrons for proteasomal degradation with the first four residues of substrates being the key recognition elements. Involved in the clearance of proteolytic fragments generated by caspase cleavage during apoptosis since N-terminal glycine degrons are strongly enriched at caspase cleavage sites. Also important in the quality control of protein N-myristoylation in which N-terminal glycine degrons are conditionally exposed after a failure of N-myristoylation. This Homo sapiens (Human) protein is Protein zer-1 homolog.